Here is a 502-residue protein sequence, read N- to C-terminus: Cysteine--tRNA ligase (502 aa).

Residue Cys30 coordinates Zn(2+). The short motif at 32 to 42 is the 'HIGH' region element; the sequence is PTIYDYAHIGN. Positions 224, 263, and 267 each coordinate Zn(2+). The 'KMSKS' region signature appears at 296 to 300; sequence KMSKS. Lys299 contacts ATP.

This sequence belongs to the class-I aminoacyl-tRNA synthetase family. In terms of assembly, monomer. Zn(2+) serves as cofactor.

The protein localises to the cytoplasm. The enzyme catalyses tRNA(Cys) + L-cysteine + ATP = L-cysteinyl-tRNA(Cys) + AMP + diphosphate. In Bartonella quintana (strain Toulouse) (Rochalimaea quintana), this protein is Cysteine--tRNA ligase.